The following is a 75-amino-acid chain: 8.9 kDa basic protein (75 aa).

In Orgyia pseudotsugata (Douglas-fir tussock moth), this protein is 8.9 kDa basic protein (P8.9).